We begin with the raw amino-acid sequence, 493 residues long: Alpha-amylase-related protein (493 aa).

The signal sequence occupies residues 1-19 (MFKFALALTLCLAGSLSLA). Glutamine 20 is modified (pyrrolidone carboxylic acid). Cysteine 47 and cysteine 103 are disulfide-bonded. 3 residues coordinate Ca(2+): asparagine 117, glutamine 168, and aspartate 177. Cysteines 156 and 170 form a disulfide. Arginine 205 provides a ligand contact to chloride. The Nucleophile role is filled by aspartate 207. Histidine 211 provides a ligand contact to Ca(2+). The Proton donor role is filled by glutamate 244. Asparagine 307 and arginine 342 together coordinate chloride. 3 disulfide bridges follow: cysteine 375-cysteine 381, cysteine 417-cysteine 440, and cysteine 447-cysteine 459.

It belongs to the glycosyl hydrolase 13 family. As to quaternary structure, monomer. Requires Ca(2+) as cofactor. Chloride serves as cofactor.

The protein resides in the secreted. It carries out the reaction Endohydrolysis of (1-&gt;4)-alpha-D-glucosidic linkages in polysaccharides containing three or more (1-&gt;4)-alpha-linked D-glucose units.. The chain is Alpha-amylase-related protein (Amyrel) from Drosophila elegans (Fruit fly).